The primary structure comprises 320 residues: ATP-dependent 6-phosphofructokinase (320 aa).

ATP is bound by residues glycine 12, 73 to 74 (RF), and 103 to 106 (GDGS). Residue aspartate 104 participates in Mg(2+) binding. 126–128 (TID) serves as a coordination point for substrate. Catalysis depends on aspartate 128, which acts as the Proton acceptor. An ADP-binding site is contributed by arginine 155. Substrate-binding positions include arginine 163 and 170–172 (MGR). Residues 186–188 (GCE) and lysine 212 each bind ADP. Substrate is bound by residues glutamate 223, arginine 244, and 250 to 253 (HIQR).

The protein belongs to the phosphofructokinase type A (PFKA) family. ATP-dependent PFK group I subfamily. Prokaryotic clade 'B1' sub-subfamily. As to quaternary structure, homotetramer. It depends on Mg(2+) as a cofactor.

It localises to the cytoplasm. It catalyses the reaction beta-D-fructose 6-phosphate + ATP = beta-D-fructose 1,6-bisphosphate + ADP + H(+). It functions in the pathway carbohydrate degradation; glycolysis; D-glyceraldehyde 3-phosphate and glycerone phosphate from D-glucose: step 3/4. With respect to regulation, allosterically activated by ADP and other diphosphonucleosides, and allosterically inhibited by phosphoenolpyruvate. In terms of biological role, catalyzes the phosphorylation of D-fructose 6-phosphate to fructose 1,6-bisphosphate by ATP, the first committing step of glycolysis. The sequence is that of ATP-dependent 6-phosphofructokinase from Buchnera aphidicola subsp. Cinara cedri (strain Cc).